Here is a 353-residue protein sequence, read N- to C-terminus: DNA-directed RNA polymerase subunit alpha (353 aa).

The alpha N-terminal domain (alpha-NTD) stretch occupies residues 1-234; it reads MVQEKVRVST…DLFIPFLHTE (234 aa). The interval 266-353 is alpha C-terminal domain (alpha-CTD); it reads KKIALKSIFI…LAQSIYSESG (88 aa).

This sequence belongs to the RNA polymerase alpha chain family. In terms of assembly, in plastids the minimal PEP RNA polymerase catalytic core is composed of four subunits: alpha, beta, beta', and beta''. When a (nuclear-encoded) sigma factor is associated with the core the holoenzyme is formed, which can initiate transcription.

Its subcellular location is the plastid. The protein resides in the chloroplast. It carries out the reaction RNA(n) + a ribonucleoside 5'-triphosphate = RNA(n+1) + diphosphate. DNA-dependent RNA polymerase catalyzes the transcription of DNA into RNA using the four ribonucleoside triphosphates as substrates. This Panax ginseng (Korean ginseng) protein is DNA-directed RNA polymerase subunit alpha.